We begin with the raw amino-acid sequence, 211 residues long: uncharacterized protein (211 aa).

Topologically, residues 1-33 (MQNGTEDKSNIPARSNDDVLPPLAVRLTMKVMR) are cytoplasmic. A helical transmembrane segment spans residues 34 to 54 (LIFIGKMFAYSFVPFPPFKLL). Topologically, residues 55 to 58 (TFDN) are lumenal. A helical transmembrane segment spans residues 59 to 79 (TVGWFVAYSAIVSIWGFAVWM). Over 80–116 (ERGYRHKINLLPPRCTKIRCSRCNTRIRSPNWFKYKN) the chain is Cytoplasmic. A helical membrane pass occupies residues 117-137 (WLYFFLLYVSLTTSNLIIQLA). The Lumenal portion of the chain corresponds to 138–162 (SFMTEMSRRGISVPGTKDPGKRDYL). A helical transmembrane segment spans residues 163–183 (GLIIPMRFIGAFIHYMTANLF). Residues 184–211 (KEYYLHNGPLEKNDRPSTDEKTSENETL) are Cytoplasmic-facing.

The protein localises to the endoplasmic reticulum membrane. This is an uncharacterized protein from Saccharomyces cerevisiae (strain ATCC 204508 / S288c) (Baker's yeast).